We begin with the raw amino-acid sequence, 310 residues long: Zinc finger protein 42 homolog (310 aa).

A compositionally biased stretch (basic residues) spans 1-15 (MSQQLKKRAKTRHQK). Positions 1–35 (MSQQLKKRAKTRHQKGLGGRAPSGAKPRQGKSSQD) are disordered. C2H2-type zinc fingers lie at residues 188–212 (IACP…LLIH), 217–239 (HVCA…FLVH), 245–269 (FRCT…VRIH), and 275–299 (FVCP…ILTH). Glycyl lysine isopeptide (Lys-Gly) (interchain with G-Cter in ubiquitin) cross-links involve residues Lys231 and Lys233.

It belongs to the krueppel C2H2-type zinc-finger protein family. Post-translationally, polyubiquitinated by RNF12, leading to proteasomal degradation. In terms of tissue distribution, expressed in kidney, epidermal keratinocytes, prostate epithelial cells, bronchial and small airway lung epithelial cells (at protein level). Expressed in malignant kidney and several carcinoma cell lines (at protein level). Expressed in embryonic stem cells, kidney, epidermal keratinocytes, prostate epithelial cells, bronchial and small airway lung epithelial cells. Expressed in embryonal carcinomas, seminomas, malignant kidney and several carcinoma cell lines.

The protein localises to the nucleus. Involved in the reprogramming of X-chromosome inactivation during the acquisition of pluripotency. Required for efficient elongation of TSIX, a non-coding RNA antisense to XIST. Binds DXPas34 enhancer within the TSIX promoter. Involved in ES cell self-renewal. This chain is Zinc finger protein 42 homolog (ZFP42), found in Homo sapiens (Human).